The primary structure comprises 202 residues: Recombination protein RecR (202 aa).

The C4-type zinc finger occupies 58-73 (CANCGNLTDKKLCDIC). In terms of domain architecture, Toprim spans 81–178 (SVITVVEDSM…KVSRIAMGVP (98 aa)).

The protein belongs to the RecR family.

May play a role in DNA repair. It seems to be involved in an RecBC-independent recombinational process of DNA repair. It may act with RecF and RecO. The sequence is that of Recombination protein RecR from Finegoldia magna (strain ATCC 29328 / DSM 20472 / WAL 2508) (Peptostreptococcus magnus).